The primary structure comprises 415 residues: Serine--tRNA ligase (415 aa).

231–233 (TAE) contributes to the L-serine binding site. ATP is bound at residue 262-264 (RSE). E285 is a binding site for L-serine. 349-352 (EISS) lines the ATP pocket. L-serine is bound at residue S383.

The protein belongs to the class-II aminoacyl-tRNA synthetase family. Type-1 seryl-tRNA synthetase subfamily. In terms of assembly, homodimer. The tRNA molecule binds across the dimer.

It localises to the cytoplasm. The enzyme catalyses tRNA(Ser) + L-serine + ATP = L-seryl-tRNA(Ser) + AMP + diphosphate + H(+). The catalysed reaction is tRNA(Sec) + L-serine + ATP = L-seryl-tRNA(Sec) + AMP + diphosphate + H(+). Its pathway is aminoacyl-tRNA biosynthesis; selenocysteinyl-tRNA(Sec) biosynthesis; L-seryl-tRNA(Sec) from L-serine and tRNA(Sec): step 1/1. In terms of biological role, catalyzes the attachment of serine to tRNA(Ser). Is also able to aminoacylate tRNA(Sec) with serine, to form the misacylated tRNA L-seryl-tRNA(Sec), which will be further converted into selenocysteinyl-tRNA(Sec). This is Serine--tRNA ligase from Helicobacter pylori (strain ATCC 700392 / 26695) (Campylobacter pylori).